Reading from the N-terminus, the 1358-residue chain is DNA-directed RNA polymerase subunit beta (1358 aa).

It belongs to the RNA polymerase beta chain family. The RNAP catalytic core consists of 2 alpha, 1 beta, 1 beta' and 1 omega subunit. When a sigma factor is associated with the core the holoenzyme is formed, which can initiate transcription.

The enzyme catalyses RNA(n) + a ribonucleoside 5'-triphosphate = RNA(n+1) + diphosphate. Functionally, DNA-dependent RNA polymerase catalyzes the transcription of DNA into RNA using the four ribonucleoside triphosphates as substrates. This Francisella tularensis subsp. mediasiatica (strain FSC147) protein is DNA-directed RNA polymerase subunit beta.